Consider the following 545-residue polypeptide: Chaperonin GroEL (545 aa).

Residues 30–33 (TLGP), Lys51, 87–91 (DGTTT), Gly415, and Asp495 contribute to the ATP site.

It belongs to the chaperonin (HSP60) family. Forms a cylinder of 14 subunits composed of two heptameric rings stacked back-to-back. Interacts with the co-chaperonin GroES.

The protein localises to the cytoplasm. The enzyme catalyses ATP + H2O + a folded polypeptide = ADP + phosphate + an unfolded polypeptide.. Together with its co-chaperonin GroES, plays an essential role in assisting protein folding. The GroEL-GroES system forms a nano-cage that allows encapsulation of the non-native substrate proteins and provides a physical environment optimized to promote and accelerate protein folding. This is Chaperonin GroEL from Shewanella sp. (strain ANA-3).